The sequence spans 305 residues: Ribosomal protein L11 methyltransferase (305 aa).

S-adenosyl-L-methionine-binding residues include Thr152, Gly173, Asp195, and Asn237.

It belongs to the methyltransferase superfamily. PrmA family.

Its subcellular location is the cytoplasm. The enzyme catalyses L-lysyl-[protein] + 3 S-adenosyl-L-methionine = N(6),N(6),N(6)-trimethyl-L-lysyl-[protein] + 3 S-adenosyl-L-homocysteine + 3 H(+). Functionally, methylates ribosomal protein L11. The sequence is that of Ribosomal protein L11 methyltransferase from Hamiltonella defensa subsp. Acyrthosiphon pisum (strain 5AT).